We begin with the raw amino-acid sequence, 712 residues long: MRLLLCKNWFASPVISPLLYTRSLYSMANTTSFPIAPQAPPNWSFTPSDISGKTNEIINNSNNFYDSMSKVESPSVSNFVEPFMKFENELGPIINQLTFLQHVSSDKEIRDASVNSSMKLDELNIDLSLRHDIFLQFARVWQDVQSKADSVERETFKYVEKSYKDYIHSGLELDEGNRLKIKEIKKKISVNSINFSKNLGEQKEYITFTKEQLEGVPDSILTQFETIKSDKDSNETLYKVTFKYPDIFPVMKLASSAQTRKQAFLADQNKVPENEAILLDTLKLRDELASLLGYDTYANYNLYDKMAEDSTTVMNFLNDLKDKLIPLGRKELQVLQDMKAEDVKKLNQGADPNYYIWDHRYYDNKYLLENFNVDLEKISEYFPLEATITGMLEIYETLFNLKFIETKDSQNKSVWHDDVKQIAVWNMDDPKSPNFVGWIYFDLHPRDGKYGHAANFGLSSSFMIDDTTRSYPVTALVCNFSKSTKDKPSLLKHNEIVTFFHELGHGIHDLVGQNKESRFNGPGSVPWDFVEAPSQMLEFWTWNKNELINLSSHYKTGEKIPESLINSLIKTKHVNGALFTLRQLHFGLFDMKVHTCKDLQNLSICDTWNQLRQDISLISNGGTLSKGYDSFGHIMSDSYSAGYYGYLWAEVFATDMYHTKFAKDPLNAKNGIQYRDIVLARGGLYDINDNLKEFLGREPSKDAFLKELGLQN.

A Phosphoserine modification is found at S73. H501 lines the Zn(2+) pocket. The active site involves E502. 2 residues coordinate Zn(2+): H505 and H508.

It belongs to the peptidase M3 family. The cofactor is Zn(2+).

Its subcellular location is the cytoplasm. It carries out the reaction Cleavage of Pro-|-Phe and Ala-|-Ala bonds.. Could be involved in late stage of protein degradation. This is Saccharolysin (PRD1) from Saccharomyces cerevisiae (strain ATCC 204508 / S288c) (Baker's yeast).